Here is a 461-residue protein sequence, read N- to C-terminus: Threonine/serine transporter ThrP (461 aa).

12 helical membrane-spanning segments follow: residues 17-37, 40-60, 97-117, 123-143, 156-176, 201-221, 244-264, 278-298, 333-353, 360-380, 401-421, and 430-450; these read IELIALGGTIGVGLFMGAAST, WAGPSVLLAYIIAGLFVFFIM, WFMWMAVGISEITAIGVYVQF, AQWIPALIAVGLVALANLAAV, IKVTTIIVMIIIGLGVIFFGF, GFLTALCIVVASYQGVELIGI, ILIFYVGAIFVIVTIFPWNEI, IGITAAAGIINFVVLTAALSG, VAGVALSILILLVGSCLNYII, FVYVYSASVLPGMVPWFVILI, IMFPWANYLTMAFLVCVLIGM, and SLFVGVIFLLAVTLVYKVFGL.

This sequence belongs to the amino acid-polyamine-organocation (APC) superfamily.

It localises to the cell inner membrane. The enzyme catalyses L-threonine(in) + H(+)(in) = L-threonine(out) + H(+)(out). It carries out the reaction L-serine(in) + H(+)(in) = L-serine(out) + H(+)(out). Its function is as follows. Permease that mediates the proton-dependent threonine and serine uptake. The sequence is that of Threonine/serine transporter ThrP from Salmonella typhi.